The following is an 841-amino-acid chain: Protein translocase subunit SecA (841 aa).

ATP-binding positions include Gln-86, 104–108, and Asp-493; that span reads GEGKT. The disordered stretch occupies residues 788-822; sequence EEVAEGKAVRPSANGQEDKKAKRKPVRKAENIGRN. Zn(2+) is bound by residues Cys-825, Cys-827, Cys-836, and Cys-837.

Belongs to the SecA family. Monomer and homodimer. Part of the essential Sec protein translocation apparatus which comprises SecA, SecYEG and auxiliary proteins SecDF. Other proteins may also be involved. Requires Zn(2+) as cofactor.

It is found in the cell membrane. It localises to the cytoplasm. The catalysed reaction is ATP + H2O + cellular proteinSide 1 = ADP + phosphate + cellular proteinSide 2.. Functionally, part of the Sec protein translocase complex. Interacts with the SecYEG preprotein conducting channel. Has a central role in coupling the hydrolysis of ATP to the transfer of proteins into and across the cell membrane, serving as an ATP-driven molecular motor driving the stepwise translocation of polypeptide chains across the membrane. The chain is Protein translocase subunit SecA from Shouchella clausii (strain KSM-K16) (Alkalihalobacillus clausii).